The sequence spans 185 residues: HTH-type transcriptional regulator SAR2658 (185 aa).

In terms of domain architecture, HTH tetR-type spans 6 to 66; that stretch reads KENRQRIEEI…YVIQRDLDIF (61 aa). The H-T-H motif DNA-binding region spans 29–48; the sequence is SMNRIAKELGIGMGTLYRHF.

The protein is HTH-type transcriptional regulator SAR2658 of Staphylococcus aureus (strain MRSA252).